The following is a 113-amino-acid chain: Putative membrane protein insertion efficiency factor (113 aa).

It belongs to the UPF0161 family.

It localises to the cell inner membrane. Could be involved in insertion of integral membrane proteins into the membrane. The polypeptide is Putative membrane protein insertion efficiency factor (Campylobacter jejuni subsp. jejuni serotype O:23/36 (strain 81-176)).